Here is an 80-residue protein sequence, read N- to C-terminus: uncharacterized protein (80 aa).

This is an uncharacterized protein from Lepidoptera (butterflies and moths).